Reading from the N-terminus, the 90-residue chain is Small ribosomal subunit protein uS17 (90 aa).

This sequence belongs to the universal ribosomal protein uS17 family. As to quaternary structure, part of the 30S ribosomal subunit.

Its function is as follows. One of the primary rRNA binding proteins, it binds specifically to the 5'-end of 16S ribosomal RNA. The protein is Small ribosomal subunit protein uS17 of Dehalococcoides mccartyi (strain ATCC BAA-2100 / JCM 16839 / KCTC 5957 / BAV1).